We begin with the raw amino-acid sequence, 240 residues long: Aliphatic sulfonates import ATP-binding protein SsuB (240 aa).

Residues 6 to 227 (IQLSKLRKNF…VKDRHFACFE (222 aa)) enclose the ABC transporter domain. An ATP-binding site is contributed by 38 to 45 (GESGCGKS).

Belongs to the ABC transporter superfamily. Aliphatic sulfonates importer (TC 3.A.1.17.2) family. The complex is composed of two ATP-binding proteins (SsuB), two transmembrane proteins (SsuC) and a solute-binding protein (SsuA).

It is found in the cell inner membrane. The enzyme catalyses ATP + H2O + aliphatic sulfonate-[sulfonate-binding protein]Side 1 = ADP + phosphate + aliphatic sulfonateSide 2 + [sulfonate-binding protein]Side 1.. In terms of biological role, part of the ABC transporter complex SsuABC involved in aliphatic sulfonates import. Responsible for energy coupling to the transport system. The sequence is that of Aliphatic sulfonates import ATP-binding protein SsuB from Zymomonas mobilis subsp. mobilis (strain ATCC 31821 / ZM4 / CP4).